We begin with the raw amino-acid sequence, 536 residues long: Lysosomal acid glucosylceramidase (536 aa).

A signal peptide spans 1-39; the sequence is MEFSSPSREECPKPSGRVSIMAGSLTGLLLLQAVSWASG. Disulfide bonds link Cys43–Cys55 and Cys57–Cys62. 3 N-linked (GlcNAc...) asparagine glycosylation sites follow: Asn58, Asn98, and Asn185. Residue Glu274 is the Proton donor of the active site. Asn309 carries N-linked (GlcNAc...) asparagine glycosylation. The Nucleophile role is filled by Glu379. N-linked (GlcNAc...) asparagine glycosylation is present at Asn501.

Belongs to the glycosyl hydrolase 30 family. Interacts with saposin-C. Interacts with SCARB2. Interacts with TCP1. Interacts with GRN; this interaction prevents aggregation of GBA1-SCARB2 complex via interaction with HSPA1A upon stress.

The protein resides in the lysosome membrane. It carries out the reaction a beta-D-glucosyl-(1&lt;-&gt;1')-N-acylsphing-4-enine + H2O = an N-acylsphing-4-enine + D-glucose. The enzyme catalyses a beta-D-galactosyl-(1&lt;-&gt;1')-N-acylsphing-4-enine + H2O = an N-acylsphing-4-enine + D-galactose. The catalysed reaction is cholesteryl 3-beta-D-glucoside + H2O = cholesterol + D-glucose. It catalyses the reaction a beta-D-glucosyl-(1&lt;-&gt;1')-N-acylsphing-4-enine + cholesterol = cholesteryl 3-beta-D-glucoside + an N-acylsphing-4-enine. It carries out the reaction beta-D-glucosyl-N-(9Z-octadecenoyl)-sphing-4E-enine + cholesterol = N-(9Z-octadecenoyl)-sphing-4-enine + cholesteryl 3-beta-D-glucoside. The enzyme catalyses beta-D-glucosyl-N-octanoylsphing-4E-enine + cholesterol = N-octanoylsphing-4-enine + cholesteryl 3-beta-D-glucoside. The catalysed reaction is beta-D-glucosyl-N-dodecanoylsphing-4-enine + cholesterol = N-dodecanoylsphing-4-enine + cholesteryl 3-beta-D-glucoside. It catalyses the reaction beta-D-glucosyl-(1&lt;-&gt;1)-N-octadecanoylsphing-4-enine + cholesterol = N-octadecanoylsphing-4-enine + cholesteryl 3-beta-D-glucoside. It carries out the reaction beta-D-glucosyl-(1&lt;-&gt;1')-N-(15Z-tetracosenoyl)-sphing-4-enine + cholesterol = N-(15Z-tetracosenoyl)-sphing-4-enine + cholesteryl 3-beta-D-glucoside. The enzyme catalyses a beta-D-galactosyl-(1&lt;-&gt;1')-N-acylsphing-4-enine + cholesterol = cholesteryl 3-beta-D-galactoside + an N-acylsphing-4-enine. The catalysed reaction is 1-(beta-D-galactosyl)-N-dodecanoylsphing-4-enine + cholesterol = cholesteryl 3-beta-D-galactoside + N-dodecanoylsphing-4-enine. It catalyses the reaction a beta-D-xylosyl-(1&lt;-&gt;1')-N-acylsphing-4-enine + cholesterol = cholesteryl 3-beta-D-xyloside + an N-acylsphing-4-enine. It carries out the reaction beta-D-xylosyl-(1&lt;-&gt;1')-N-(9Z-octadecenoyl)-sphing-4-enine + cholesterol = cholesteryl 3-beta-D-xyloside + N-(9Z-octadecenoyl)-sphing-4-enine. Its pathway is steroid metabolism; cholesterol metabolism. It participates in sphingolipid metabolism. Functionally, glucosylceramidase that catalyzes, within the lysosomal compartment, the hydrolysis of glucosylceramides/GlcCers (such as beta-D-glucosyl-(1&lt;-&gt;1')-N-acylsphing-4-enine) into free ceramides (such as N-acylsphing-4-enine) and glucose. Plays a central role in the degradation of complex lipids and the turnover of cellular membranes. Through the production of ceramides, participates in the PKC-activated salvage pathway of ceramide formation. Catalyzes the glucosylation of cholesterol, through a transglucosylation reaction where glucose is transferred from GlcCer to cholesterol. GlcCer containing mono-unsaturated fatty acids (such as beta-D-glucosyl-N-(9Z-octadecenoyl)-sphing-4-enine) are preferred as glucose donors for cholesterol glucosylation when compared with GlcCer containing same chain length of saturated fatty acids (such as beta-D-glucosyl-N-octadecanoyl-sphing-4-enine). Under specific conditions, may alternatively catalyze the reverse reaction, transferring glucose from cholesteryl 3-beta-D-glucoside to ceramide. Can also hydrolyze cholesteryl 3-beta-D-glucoside producing glucose and cholesterol. Catalyzes the hydrolysis of galactosylceramides/GalCers (such as beta-D-galactosyl-(1&lt;-&gt;1')-N-acylsphing-4-enine), as well as the transfer of galactose between GalCers and cholesterol in vitro, but with lower activity than with GlcCers. Contrary to GlcCer and GalCer, xylosylceramide/XylCer (such as beta-D-xyosyl-(1&lt;-&gt;1')-N-acylsphing-4-enine) is not a good substrate for hydrolysis, however it is a good xylose donor for transxylosylation activity to form cholesteryl 3-beta-D-xyloside. This is Lysosomal acid glucosylceramidase (GBA1) from Pan troglodytes (Chimpanzee).